A 146-amino-acid polypeptide reads, in one-letter code: Hemoglobin subunit beta (146 aa).

A Globin domain is found at 2-146 (HWSAEEKQLI…VAHALARKYH (145 aa)). Residues His63 and His92 each contribute to the heme b site.

It belongs to the globin family. Heterotetramer of two alpha chains and two beta chains. In terms of tissue distribution, red blood cells.

Its function is as follows. Involved in oxygen transport from the lung to the various peripheral tissues. The protein is Hemoglobin subunit beta (HBB) of Phasianus colchicus colchicus (Black-necked pheasant).